A 67-amino-acid polypeptide reads, in one-letter code: Putative ATP synthase subunit epsilon, mitochondrial (67 aa).

It belongs to the eukaryotic ATPase epsilon family. F-type ATPases have 2 components, CF(1) - the catalytic core - and CF(0) - the membrane proton channel. CF(1) has five subunits: alpha(3), beta(3), gamma(1), delta(1), epsilon(1). CF(0) seems to have nine subunits: a, b, c, d, e, f, g, F6 and 8 (or A6L).

The protein localises to the mitochondrion. It localises to the mitochondrion inner membrane. Mitochondrial membrane ATP synthase (F(1)F(0) ATP synthase or Complex V) produces ATP from ADP in the presence of a proton gradient across the membrane which is generated by electron transport complexes of the respiratory chain. F-type ATPases consist of two structural domains, F(1) - containing the extramembraneous catalytic core, and F(0) - containing the membrane proton channel, linked together by a central stalk and a peripheral stalk. During catalysis, ATP synthesis in the catalytic domain of F(1) is coupled via a rotary mechanism of the central stalk subunits to proton translocation. Part of the complex F(1) domain and of the central stalk which is part of the complex rotary element. Rotation of the central stalk against the surrounding alpha(3)beta(3) subunits leads to hydrolysis of ATP in three separate catalytic sites on the beta subunits. The chain is Putative ATP synthase subunit epsilon, mitochondrial (atp15) from Schizosaccharomyces pombe (strain 972 / ATCC 24843) (Fission yeast).